Consider the following 433-residue polypeptide: Polygalacturonase ADPG2 (433 aa).

Positions 1 to 24 (MARCTNLVTVFLLWALLMFSWCKA) are cleaved as a signal peptide. PbH1 repeat units follow at residues 223-249 (CSNVQVSNVVVTAPADSPNTDGIHITN), 250-271 (TQNIRVSESIIGTGDDCISIES), 273-293 (SQNVQINDITCGPGHGISIGS), 303-324 (VSGVTVDGAKLSGTDNGVRIKT), and 332-353 (ASNIIFQNIQMDNVKNPIIIDQ). Catalysis depends on Asp-264, which acts as the Proton donor. The active site involves His-287.

Belongs to the glycosyl hydrolase 28 family. In terms of tissue distribution, expressed in roots and in the abscission zone of the sepals, petals and stamens of flowers, at the base of cauline leaves and in the basal cell of trichomes from senescing leaves. Found at the site of lateral root emergence, in the dehiscence zone of anthers and maturing siliques. Also expressed early in anther development, at the time of microspore separation. Expressed in germinating seeds, at the point at which the radicle broke through the seed coat. Not expressed at the junction between the seed and the funiculus or in the dehiscence zone of anthers or pods.

Its subcellular location is the secreted. The protein resides in the cell wall. The enzyme catalyses (1,4-alpha-D-galacturonosyl)n+m + H2O = (1,4-alpha-D-galacturonosyl)n + (1,4-alpha-D-galacturonosyl)m.. Functionally, polygalacturonase involved in cell separation in the final stages of pod shatter, in anther dehiscence and in floral organ abscission. The polypeptide is Polygalacturonase ADPG2 (ADPG2) (Arabidopsis thaliana (Mouse-ear cress)).